The sequence spans 470 residues: Argininosuccinate lyase (470 aa).

It belongs to the lyase 1 family. Argininosuccinate lyase subfamily.

It localises to the cytoplasm. It carries out the reaction 2-(N(omega)-L-arginino)succinate = fumarate + L-arginine. It functions in the pathway amino-acid biosynthesis; L-arginine biosynthesis; L-arginine from L-ornithine and carbamoyl phosphate: step 3/3. The polypeptide is Argininosuccinate lyase (Ehrlichia chaffeensis (strain ATCC CRL-10679 / Arkansas)).